The following is a 344-amino-acid chain: Methionine import ATP-binding protein MetN (344 aa).

The region spanning 2–241 (IEINRVNKIF…PKTALAQEFI (240 aa)) is the ABC transporter domain. 38 to 45 (GSSGAGKS) provides a ligand contact to ATP.

The protein belongs to the ABC transporter superfamily. Methionine importer (TC 3.A.1.24) family. In terms of assembly, the complex is composed of two ATP-binding proteins (MetN), two transmembrane proteins (MetI) and a solute-binding protein (MetQ).

The protein resides in the cell inner membrane. The enzyme catalyses L-methionine(out) + ATP + H2O = L-methionine(in) + ADP + phosphate + H(+). It carries out the reaction D-methionine(out) + ATP + H2O = D-methionine(in) + ADP + phosphate + H(+). In terms of biological role, part of the ABC transporter complex MetNIQ involved in methionine import. Responsible for energy coupling to the transport system. This Aliivibrio fischeri (strain ATCC 700601 / ES114) (Vibrio fischeri) protein is Methionine import ATP-binding protein MetN.